The primary structure comprises 268 residues: Syntaxin-22 (268 aa).

Positions 1–23 (MSFQDLESGRGRSTRKFNGGRQD) are disordered. Ser2 bears the N-acetylserine mark. Topologically, residues 2–246 (SFQDLESGRG…AAKTQKSNSS (245 aa)) are cytoplasmic. Residues 175-237 (EAVIEEREQG…SQGKSQLVQA (63 aa)) form the t-SNARE coiled-coil homology domain. The chain crosses the membrane as a helical; Anchor for type IV membrane protein span at residues 247-267 (LTCLLLVIFGIVLLIVIIVLA). Ala268 is a topological domain (vesicular).

This sequence belongs to the syntaxin family. Interacts with VTI11 and SYP51 to form a t-SNARE complex, but not with VPS45. Expressed in roots, leaves, stems, flower and green siliques.

Its subcellular location is the prevacuolar compartment membrane. It localises to the vacuole membrane. Functionally, may provide the t-SNARE function in the vacuolar assembly. Promotes the formation of vacuolar membrane 'bulbs'. Required for inflorescence stem gravitropism. The sequence is that of Syntaxin-22 (SYP22) from Arabidopsis thaliana (Mouse-ear cress).